The chain runs to 433 residues: 3-phosphoshikimate 1-carboxyvinyltransferase (433 aa).

Residues lysine 22, serine 23, and arginine 27 each coordinate 3-phosphoshikimate. Lysine 22 contacts phosphoenolpyruvate. Positions 95 and 123 each coordinate phosphoenolpyruvate. 3-phosphoshikimate is bound by residues serine 167, glutamine 169, aspartate 315, and lysine 342. Glutamine 169 provides a ligand contact to phosphoenolpyruvate. Residue aspartate 315 is the Proton acceptor of the active site. Phosphoenolpyruvate contacts are provided by arginine 346 and arginine 387.

Belongs to the EPSP synthase family. As to quaternary structure, monomer.

The protein resides in the cytoplasm. It carries out the reaction 3-phosphoshikimate + phosphoenolpyruvate = 5-O-(1-carboxyvinyl)-3-phosphoshikimate + phosphate. It participates in metabolic intermediate biosynthesis; chorismate biosynthesis; chorismate from D-erythrose 4-phosphate and phosphoenolpyruvate: step 6/7. In terms of biological role, catalyzes the transfer of the enolpyruvyl moiety of phosphoenolpyruvate (PEP) to the 5-hydroxyl of shikimate-3-phosphate (S3P) to produce enolpyruvyl shikimate-3-phosphate and inorganic phosphate. In Legionella pneumophila (strain Lens), this protein is 3-phosphoshikimate 1-carboxyvinyltransferase.